Reading from the N-terminus, the 501-residue chain is Ribose import ATP-binding protein RbsA (501 aa).

ABC transporter domains follow at residues 6–242 and 253–495; these read LQLS…VGRK and VHGQ…VGKK. Residue 38–45 coordinates ATP; it reads GENGAGKS.

Belongs to the ABC transporter superfamily. Ribose importer (TC 3.A.1.2.1) family. The complex is composed of an ATP-binding protein (RbsA), two transmembrane proteins (RbsC) and a solute-binding protein (RbsB).

Its subcellular location is the cell inner membrane. The catalysed reaction is D-ribose(out) + ATP + H2O = D-ribose(in) + ADP + phosphate + H(+). Part of the ABC transporter complex RbsABC involved in ribose import. Responsible for energy coupling to the transport system. This Vibrio vulnificus (strain CMCP6) protein is Ribose import ATP-binding protein RbsA.